The chain runs to 367 residues: Developmentally-regulated GTP-binding protein 1 (367 aa).

Ser-2 is modified (N-acetylserine). The required for interaction with STK16 stretch occupies residues 2-16 (SSTLAKIAEIEAEMA). Residue Lys-22 is modified to (3S)-3-hydroxylysine. Positions 65-290 (ARIGFVGFPS…LLEKIWDYLK (226 aa)) constitute an OBG-type G domain. Residues 71-78 (GFPSVGKS), 96-100 (FTTLT), 117-120 (DLPG), 248-251 (NKID), and 271-273 (SAH) each bind GTP. Mg(2+) is bound by residues Ser-78 and Thr-98. At Thr-100 the chain carries Phosphothreonine; by STK16. The TGS domain maps to 290-366 (KLVRIYTKPK…EDEDVIQIVK (77 aa)).

It belongs to the TRAFAC class OBG-HflX-like GTPase superfamily. OBG GTPase family. As to quaternary structure, interacts (via its C-terminal) with TAL1. Interacts with DFRP1/ZC3H15; this interaction prevents DRG1 poly-ubiquitination and degradation by proteasome. DRG1-ZC3H15/DFRP1 complex co-sediments with polysomes. Interacts with STK16. Interacts with JMJD7. Post-translationally, sumoylated by UBE2I in response to MEKK1-mediated stimuli. In terms of processing, hydroxylated (with S stereochemistry) at C-3 of Lys-22 by JMJD7. Phosphorylated at Thr-100 by STK16. Post-translationally, polyubiquitinated; this modification induces proteolytic degradation and is impaired by interaction with ZC3H15.

The protein resides in the nucleus. It is found in the cytoplasm. It catalyses the reaction GTP + H2O = GDP + phosphate + H(+). Its activity is regulated as follows. The GTPase activity is enhanced by potassium ions as well as by DFRP1 binding. Functionally, catalyzes the conversion of GTP to GDP through hydrolysis of the gamma-phosphate bond in GTP. Appears to have an intrinsic GTPase activity that is stimulated by ZC3H15/DFRP1 binding likely by increasing the affinity for the potassium ions. When hydroxylated at C-3 of 'Lys-22' by JMJD7, may bind to RNA and play a role in translation. Binds to microtubules and promotes microtubule polymerization and bundling that are required for mitotic spindle assembly during prophase to anaphase transition. GTPase activity is not necessary for these microtubule-related functions. The chain is Developmentally-regulated GTP-binding protein 1 (DRG1) from Bos taurus (Bovine).